The chain runs to 308 residues: Palmitoyltransferase ZDHHC7 (308 aa).

The Cytoplasmic segment spans residues 1-50 (MQPSGHRLRDIEHHPLLTDNDNYDSASSSSSETDMADRVWFIRDGCGMVC). A helical transmembrane segment spans residues 51–71 (AVMTWLLVVYADFVVTFVMLL). Over 72–75 (PSKD) the chain is Lumenal. The helical transmembrane segment at 76–96 (FWYSVVNGVLFNCLAVLALSS) threads the bilayer. At 97 to 173 (HLRTMLTDPG…NNCVGEKNQR (77 aa)) the chain is on the cytoplasmic side. Positions 130–180 (YKCPKCCCIKPERAHHCSICKRCIRKMDHHCPWVNNCVGEKNQRFFVLFTM) constitute a DHHC domain. The active-site S-palmitoyl cysteine intermediate is cysteine 160. Residues 174-194 (FFVLFTMYIALSSVHALILCG) form a helical membrane-spanning segment. The Lumenal portion of the chain corresponds to 195 to 217 (LQFISCVRGQWTECSDFSPPITV). Residues 218–238 (ILLVFLCLEGLLFFTFTAVMF) form a helical membrane-spanning segment. Topologically, residues 239-308 (GTQIHSICND…TRKGGPEFSV (70 aa)) are cytoplasmic.

The protein belongs to the DHHC palmitoyltransferase family. Homooligomers. Heterooligomers with ZDHHC3. In terms of processing, autopalmitoylated. As to expression, ubiquitously expressed, with highest levels in liver, kidney and brain. Expressed in all brain regions.

The protein localises to the golgi apparatus membrane. It carries out the reaction L-cysteinyl-[protein] + hexadecanoyl-CoA = S-hexadecanoyl-L-cysteinyl-[protein] + CoA. It catalyses the reaction L-cysteinyl-[protein] + tetradecanoyl-CoA = S-tetradecanoyl-L-cysteinyl-[protein] + CoA. The catalysed reaction is L-cysteinyl-[protein] + octadecanoyl-CoA = S-octadecanoyl-L-cysteinyl-[protein] + CoA. Functionally, golgi-localized palmitoyltransferase that catalyzes the addition of palmitate onto various protein substrates and therefore functions in several unrelated biological processes. Has no stringent fatty acid selectivity and in addition to palmitate can also transfer onto target proteins myristate from tetradecanoyl-CoA and stearate from octadecanoyl-CoA. Palmitoylates sex steroid hormone receptors, including ESR1, PGR and AR, thereby regulating their targeting to the plasma membrane and their function in rapid intracellular signaling upon binding of sex hormones. Palmitoylates GNAQ, a heterotrimeric G protein, regulating its dynamic localization at the plasma membrane and is thereby involved in GNAQ-dependent G protein-coupled receptor signaling pathways. Also functions in ligand-induced cell death by regulating the FAS signaling pathway through the palmitoylation and stabilization of the receptor at the plasma membrane. In epithelial cells, palmitoylates SCRIB and regulates its localization to the plasma membrane, regulating indirectly cell polarity and differentiation. Also palmitoylates JAM3 and promotes its expression at tight junctions and regulates its function in cell migration. Palmitoylates the glucose transporter GLUT4/SLC2A4 and controls the insulin-dependent translocation of GLUT4 to the plasma membrane. In brain, could also palmitoylate SNAP25 and DLG4/PSD95. Could also palmitoylate DNAJC5 and regulate its localization to the Golgi membrane. Could also palmitoylate NCDN. May play a role in follicle stimulation hormone (FSH) activation of testicular Sertoli cells. Activates pyroptosis by catalyzing palmitoylation of gasdermin-D (GSDMD). The protein is Palmitoyltransferase ZDHHC7 of Mus musculus (Mouse).